A 361-amino-acid chain; its full sequence is Chorismate synthase (361 aa).

Positions 48 and 54 each coordinate NADP(+). Residues 125 to 127 (RSS), 238 to 239 (NA), G278, 293 to 297 (KPTSS), and R319 contribute to the FMN site.

Belongs to the chorismate synthase family. Homotetramer. It depends on FMNH2 as a cofactor.

The enzyme catalyses 5-O-(1-carboxyvinyl)-3-phosphoshikimate = chorismate + phosphate. Its pathway is metabolic intermediate biosynthesis; chorismate biosynthesis; chorismate from D-erythrose 4-phosphate and phosphoenolpyruvate: step 7/7. Its function is as follows. Catalyzes the anti-1,4-elimination of the C-3 phosphate and the C-6 proR hydrogen from 5-enolpyruvylshikimate-3-phosphate (EPSP) to yield chorismate, which is the branch point compound that serves as the starting substrate for the three terminal pathways of aromatic amino acid biosynthesis. This reaction introduces a second double bond into the aromatic ring system. The polypeptide is Chorismate synthase (Vibrio vulnificus (strain YJ016)).